The chain runs to 442 residues: Cyclic AMP receptor-like protein B (442 aa).

Topologically, residues 1 to 16 (MGGDIHLCSMILGKNH) are extracellular. The helical transmembrane segment at 17–37 (LIFLYFANLFGSTLSFLATII) threads the bilayer. The Cytoplasmic portion of the chain corresponds to 38–219 (TIVFYLVKKY…PKKIDTLIFY (182 aa)). A disordered region spans residues 83–166 (YSSTPISIQN…LSSSDKNNTI (84 aa)). Positions 91–103 (QNNNNKNNNLPKQ) are enriched in low complexity. Over residues 112–122 (INKNHNNYCNY) the composition is skewed to polar residues. Low complexity predominate over residues 123 to 144 (STSATSSSSSSSSFSSTNSGSS). Polar residues predominate over residues 145–166 (YEYQQPQKNQQTLSSSDKNNTI). A helical transmembrane segment spans residues 220–240 (LSISDFIAVSGIIIEQLIIIF). Residues 241-255 (NKEISKSIGFCIGER) lie on the Extracellular side of the membrane. Residues 256 to 276 (VSIHFGLLATLFWSNCIAYYL) traverse the membrane as a helical segment. The Cytoplasmic segment spans residues 277–289 (LRETYELKPYNIR). The chain crosses the membrane as a helical span at residues 290–310 (FVYFHIVCWGMALIGVASLFF). At 311 to 334 (SKIITVSNIDQGGSWCSVSSSYQL) the chain is on the extracellular side. A helical membrane pass occupies residues 335–355 (YFWVIPLFVSFTWNLICYCLI). Topologically, residues 356 to 382 (YRKFNKIIGIYGIQSVQIKTIIIRKLS) are cytoplasmic. Residues 383–403 (FYLLAFLITWVWDVINNSIFL) traverse the membrane as a helical segment. Topologically, residues 404 to 410 (YEGKCPP) are extracellular. The chain crosses the membrane as a helical span at residues 411–431 (FALWILQEFFSSGYGFFNSLA). The Cytoplasmic portion of the chain corresponds to 432–442 (YAVTTRFYSRK).

Belongs to the G-protein coupled receptor 5 family.

Its subcellular location is the membrane. Its function is as follows. Receptor for cAMP. The polypeptide is Cyclic AMP receptor-like protein B (crlB) (Dictyostelium discoideum (Social amoeba)).